The sequence spans 426 residues: Zinc finger CCCH domain-containing protein 13 (426 aa).

Residues 10 to 36 (AYKTKLCALWQRGNCNRDTCSFAHGHG) form a C3H1-type zinc finger. Disordered stretches follow at residues 34–155 (GHGD…HEKQ), 253–317 (NEEG…DKTS), and 390–426 (NDAD…VDVE). 3 stretches are compositionally biased toward basic and acidic residues: residues 54 to 70 (RRDY…DRRF), 78 to 101 (PGRE…RDSS), and 108 to 120 (RKSE…KTDD). Low complexity predominate over residues 124–133 (NSSRSLSLSD). Basic and acidic residues predominate over residues 135–155 (NDEKKKDKFSSGDEKEDHEKQ). Residues 144 to 245 (SSGDEKEDHE…FERLGDLLAS (102 aa)) are a coiled coil. Over residues 255–272 (EGSSVNEDLNERSPNTAA) the composition is skewed to polar residues. The span at 284-317 (EEAKAVKKRRERDSDTMTRSDKYRSDVTDFDKTS) shows a compositional bias: basic and acidic residues. Acidic residues predominate over residues 416–426 (YEGDDEEVDVE).

This is Zinc finger CCCH domain-containing protein 13 from Oryza sativa subsp. japonica (Rice).